The chain runs to 261 residues: Thioredoxin-like protein HCF164, chloroplastic (261 aa).

Residues 1–40 (MARLVFSLNLPSSHGFNLSPRNLQSFFVTQTGAPRFRAVR) constitute a chloroplast transit peptide. The interval 39 to 91 (VRCKPNPESSETKQEKLVIDNGETSSASKEVESSSSVADSSSSSSSGFPESPN) is disordered. The segment covering 63–84 (SSASKEVESSSSVADSSSSSSS) has biased composition (low complexity). A Thioredoxin domain is found at 101-229 (VTVIAALSLF…LVENVNALAA (129 aa)). Residues cysteine 150 and cysteine 153 each act as nucleophile in the active site. Cysteine 150 and cysteine 153 are oxidised to a cystine.

It belongs to the thioredoxin family. As to quaternary structure, interacts in vitro with LTO1.

The protein resides in the plastid. It is found in the chloroplast thylakoid membrane. Thiol-disulfide oxidoreductase that participates in various redox reactions in the chloroplast. Mediates the reduction of PSI-N in the thylakoid lumen. May interact and probably reduce other target proteins of the thylakoid membrane, such as FTSH2, FTSH8, LHCB5, atpA, atpB, atpE, petA and petC. Involved in the biogenesis of the plastid cytochrome b6f complex. Reducing equivalents are provided by stromal M-type thioredoxins and probably transduced through the thylakoid membrane by CCDA. Possesses low insulin disulfide bonds reducing activity. The sequence is that of Thioredoxin-like protein HCF164, chloroplastic from Arabidopsis thaliana (Mouse-ear cress).